The following is a 146-amino-acid chain: MAFINLLILIILTLSSTPITTMSIPETNRRNATTNSYTDVALSARKGAFPPPRKLGEYSTNSTDYNLICKTCKRLSERNTCCFNYSCVDVSTNRFNCGSCGLVCNLGTRCCGGICVDIQKDNGNCGKCSNVCSPGQKCSFGFCDYA.

Positions 1 to 23 (MAFINLLILIILTLSSTPITTMS) are cleaved as a signal peptide. Asn-31, Asn-61, and Asn-84 each carry an N-linked (GlcNAc...) asparagine glycan.

This sequence belongs to the STIG1 family. Post-translationally, glycosylated. As to expression, expressed exclusively in the stigmatic secretory zone.

The protein resides in the secreted. Involved in the temporal regulation of the exudate secretion onto the stigma. The protein is Protein STIG1 of Nicotiana tabacum (Common tobacco).